A 230-amino-acid polypeptide reads, in one-letter code: Small ribosomal subunit protein uS3 (230 aa).

A KH type-2 domain is found at 39-107 (VRKFLVEKLQ…PAQINIAEIR (69 aa)).

It belongs to the universal ribosomal protein uS3 family. In terms of assembly, part of the 30S ribosomal subunit. Forms a tight complex with proteins S10 and S14.

Binds the lower part of the 30S subunit head. Binds mRNA in the 70S ribosome, positioning it for translation. The protein is Small ribosomal subunit protein uS3 of Shewanella putrefaciens (strain CN-32 / ATCC BAA-453).